The primary structure comprises 201 residues: Casparian strip membrane protein 7 (201 aa).

The span at 1-11 (MEAGEEIEDGE) shows a compositional bias: acidic residues. The interval 1 to 26 (MEAGEEIEDGEPSTPTYKAHHPPPHL) is disordered. At 1 to 34 (MEAGEEIEDGEPSTPTYKAHHPPPHLPPPMRSSG) the chain is on the cytoplasmic side. Residues 35-55 (VSLVLSVADLVLRFVAIGGTA) traverse the membrane as a helical segment. Topologically, residues 56–86 (GSAIAMATTSETLPFAAPFVRFRAEYSDLPT) are extracellular. A helical membrane pass occupies residues 87–107 (LMFFVVASSVVCAYLVLSLPA). The Cytoplasmic segment spans residues 108–128 (SVVHVVRPGARSSRAILAFLD). Residues 129–149 (TVMLALLTASASAAAAIVYLA) form a helical membrane-spanning segment. The Extracellular segment spans residues 150 to 171 (HRGSARANWLGICQQFTSFCQR). The helical transmembrane segment at 172–192 (ITASLVGSFAAAVVLVALVFL) threads the bilayer. Topologically, residues 193–201 (SALSLARRA) are cytoplasmic.

The protein belongs to the Casparian strip membrane proteins (CASP) family. As to quaternary structure, homodimer and heterodimers.

The protein resides in the cell membrane. Its function is as follows. Regulates membrane-cell wall junctions and localized cell wall deposition. Required for establishment of the Casparian strip membrane domain (CSD) and the subsequent formation of Casparian strips, a cell wall modification of the root endodermis that determines an apoplastic barrier between the intraorganismal apoplasm and the extraorganismal apoplasm and prevents lateral diffusion. The sequence is that of Casparian strip membrane protein 7 from Oryza sativa subsp. japonica (Rice).